A 373-amino-acid polypeptide reads, in one-letter code: Phosphoserine aminotransferase (373 aa).

Arginine 41 contributes to the L-glutamate binding site. Pyridoxal 5'-phosphate is bound by residues 75-76 (GT), tryptophan 101, threonine 152, aspartate 172, and glutamine 195. Lysine 196 carries the post-translational modification N6-(pyridoxal phosphate)lysine. Pyridoxal 5'-phosphate is bound at residue 236–237 (NT).

This sequence belongs to the class-V pyridoxal-phosphate-dependent aminotransferase family. SerC subfamily. In terms of assembly, homodimer. The cofactor is pyridoxal 5'-phosphate.

It localises to the cytoplasm. It carries out the reaction O-phospho-L-serine + 2-oxoglutarate = 3-phosphooxypyruvate + L-glutamate. The enzyme catalyses 4-(phosphooxy)-L-threonine + 2-oxoglutarate = (R)-3-hydroxy-2-oxo-4-phosphooxybutanoate + L-glutamate. Its pathway is amino-acid biosynthesis; L-serine biosynthesis; L-serine from 3-phospho-D-glycerate: step 2/3. Functionally, catalyzes the reversible conversion of 3-phosphohydroxypyruvate to phosphoserine and of 3-hydroxy-2-oxo-4-phosphonooxybutanoate to phosphohydroxythreonine. In Lactobacillus helveticus (strain DPC 4571), this protein is Phosphoserine aminotransferase.